Here is a 296-residue protein sequence, read N- to C-terminus: Chronophin (296 aa).

The active-site Nucleophile is the aspartate 25. Mg(2+) contacts are provided by aspartate 25 and aspartate 27. Catalysis depends on aspartate 27, which acts as the Proton donor. Substrate contacts are provided by residues 58-60 (SNN), histidine 182, and lysine 213. Aspartate 238 provides a ligand contact to Mg(2+).

This sequence belongs to the HAD-like hydrolase superfamily. In terms of assembly, homodimer. Requires Mg(2+) as cofactor. As to expression, ubiquitously expressed (at protein level). Highly expressed in all the regions of central nerve system except the spinal cord. Also expressed at high level in liver and testis. In fetus, it is weakly expressed in all organs except brain.

It localises to the cytoplasm. Its subcellular location is the cytosol. It is found in the cytoskeleton. The protein resides in the cell projection. The protein localises to the ruffle membrane. It localises to the lamellipodium membrane. Its subcellular location is the cell membrane. It catalyses the reaction pyridoxal 5'-phosphate + H2O = pyridoxal + phosphate. The enzyme catalyses pyridoxine 5'-phosphate + H2O = pyridoxine + phosphate. The catalysed reaction is pyridoxamine + phosphate = pyridoxamine 5'-phosphate + H2O. It carries out the reaction O-phospho-L-seryl-[protein] + H2O = L-seryl-[protein] + phosphate. Inhibited by NaF, Zn(2+), Ca(2+), Mn(2+) and EDTA. Functionally, functions as a pyridoxal phosphate (PLP) phosphatase, which also catalyzes the dephosphorylation of pyridoxine 5'-phosphate (PNP) and pyridoxamine 5'-phosphate (PMP), with order of substrate preference PLP &gt; PNP &gt; PMP and therefore plays a role in vitamin B6 metabolism. Also functions as a protein serine phosphatase that specifically dephosphorylates 'Ser-3' in proteins of the actin-depolymerizing factor (ADF)/cofilin family like CFL1 and DSTN. Thereby, regulates cofilin-dependent actin cytoskeleton reorganization, being required for normal progress through mitosis and normal cytokinesis. Does not dephosphorylate phosphothreonines in LIMK1. Does not dephosphorylate peptides containing phosphotyrosine. The chain is Chronophin from Homo sapiens (Human).